The following is a 209-amino-acid chain: Large ribosomal subunit protein uL3 (209 aa).

The tract at residues 133–153 (THGNSLSHRAPGSIGQNQTPG) is disordered. Gln150 is modified (N5-methylglutamine).

This sequence belongs to the universal ribosomal protein uL3 family. Part of the 50S ribosomal subunit. Forms a cluster with proteins L14 and L19. Post-translationally, methylated by PrmB.

Its function is as follows. One of the primary rRNA binding proteins, it binds directly near the 3'-end of the 23S rRNA, where it nucleates assembly of the 50S subunit. This chain is Large ribosomal subunit protein uL3, found in Pectobacterium atrosepticum (strain SCRI 1043 / ATCC BAA-672) (Erwinia carotovora subsp. atroseptica).